We begin with the raw amino-acid sequence, 272 residues long: Phosphate import ATP-binding protein PstB 1 (272 aa).

In terms of domain architecture, ABC transporter spans 26–267; sequence ISIENLNLFY…PMKKQTEDYI (242 aa). 58 to 65 contributes to the ATP binding site; that stretch reads GPSGCGKS.

Belongs to the ABC transporter superfamily. Phosphate importer (TC 3.A.1.7) family. In terms of assembly, the complex is composed of two ATP-binding proteins (PstB), two transmembrane proteins (PstC and PstA) and a solute-binding protein (PstS).

It is found in the cell inner membrane. The catalysed reaction is phosphate(out) + ATP + H2O = ADP + 2 phosphate(in) + H(+). Functionally, part of the ABC transporter complex PstSACB involved in phosphate import. Responsible for energy coupling to the transport system. This is Phosphate import ATP-binding protein PstB 1 from Vibrio parahaemolyticus serotype O3:K6 (strain RIMD 2210633).